Consider the following 128-residue polypeptide: Sulfurtransferase TusD (128 aa).

Cysteine 78 serves as the catalytic Cysteine persulfide intermediate.

This sequence belongs to the DsrE/TusD family. Heterohexamer, formed by a dimer of trimers. The hexameric TusBCD complex contains 2 copies each of TusB, TusC and TusD. The TusBCD complex interacts with TusE.

Its subcellular location is the cytoplasm. Functionally, part of a sulfur-relay system required for 2-thiolation of 5-methylaminomethyl-2-thiouridine (mnm(5)s(2)U) at tRNA wobble positions. Accepts sulfur from TusA and transfers it in turn to TusE. This is Sulfurtransferase TusD from Erwinia tasmaniensis (strain DSM 17950 / CFBP 7177 / CIP 109463 / NCPPB 4357 / Et1/99).